A 643-amino-acid polypeptide reads, in one-letter code: 1-deoxy-D-xylulose-5-phosphate synthase (643 aa).

Thiamine diphosphate is bound by residues histidine 71 and 112–114; that span reads SHA. Aspartate 144 is a Mg(2+) binding site. Thiamine diphosphate contacts are provided by residues 145–146, asparagine 173, tyrosine 284, and glutamate 365; that span reads GA. Asparagine 173 provides a ligand contact to Mg(2+).

Belongs to the transketolase family. DXPS subfamily. As to quaternary structure, homodimer. Requires Mg(2+) as cofactor. The cofactor is thiamine diphosphate.

It catalyses the reaction D-glyceraldehyde 3-phosphate + pyruvate + H(+) = 1-deoxy-D-xylulose 5-phosphate + CO2. It functions in the pathway metabolic intermediate biosynthesis; 1-deoxy-D-xylulose 5-phosphate biosynthesis; 1-deoxy-D-xylulose 5-phosphate from D-glyceraldehyde 3-phosphate and pyruvate: step 1/1. Catalyzes the acyloin condensation reaction between C atoms 2 and 3 of pyruvate and glyceraldehyde 3-phosphate to yield 1-deoxy-D-xylulose-5-phosphate (DXP). The protein is 1-deoxy-D-xylulose-5-phosphate synthase of Mycobacterium leprae (strain Br4923).